Here is a 231-residue protein sequence, read N- to C-terminus: Elongation factor 1-delta (231 aa).

Residues 75-136 (SGVTVEGNAP…AAAAAAKPAK (62 aa)) are disordered. Over residues 101 to 117 (ADDDDDDDVDLFGEETE) the composition is skewed to acidic residues. A compositionally biased stretch (basic and acidic residues) spans 118–127 (EEKKAAEERA).

Belongs to the EF-1-beta/EF-1-delta family. In terms of assembly, EF-1 is composed of 4 subunits: alpha, beta (1B-alpha=beta'), delta (1B-beta), and gamma (1B-gamma).

Functionally, EF-1-beta and EF-1-beta' stimulate the exchange of GDP bound to EF-1-alpha to GTP. This chain is Elongation factor 1-delta, found in Beta vulgaris (Sugar beet).